Consider the following 590-residue polypeptide: Aspartate--tRNA(Asp/Asn) ligase (590 aa).

E173 provides a ligand contact to L-aspartate. Residues 197–200 (QIFK) form an aspartate region. L-aspartate is bound at residue R219. ATP contacts are provided by residues 219-221 (RDE) and Q228. L-aspartate is bound at residue H450. E484 serves as a coordination point for ATP. R491 is an L-aspartate binding site. An ATP-binding site is contributed by 536–539 (GLDR).

Belongs to the class-II aminoacyl-tRNA synthetase family. Type 1 subfamily. As to quaternary structure, homodimer.

It localises to the cytoplasm. It catalyses the reaction tRNA(Asx) + L-aspartate + ATP = L-aspartyl-tRNA(Asx) + AMP + diphosphate. Functionally, aspartyl-tRNA synthetase with relaxed tRNA specificity since it is able to aspartylate not only its cognate tRNA(Asp) but also tRNA(Asn). Reaction proceeds in two steps: L-aspartate is first activated by ATP to form Asp-AMP and then transferred to the acceptor end of tRNA(Asp/Asn). The polypeptide is Aspartate--tRNA(Asp/Asn) ligase (Coxiella burnetii (strain RSA 331 / Henzerling II)).